The chain runs to 401 residues: Elongation factor Tu (401 aa).

The 202-residue stretch at 10–211 folds into the tr-type G domain; the sequence is KPHLNIGTIG…AVDTYVPNPT (202 aa). The G1 stretch occupies residues 19-26; sequence GHVDHGKT. 19–26 provides a ligand contact to GTP; it reads GHVDHGKT. T26 serves as a coordination point for Mg(2+). Positions 62–66 are G2; it reads GITIA. The tract at residues 83 to 86 is G3; that stretch reads DCPG. GTP is bound by residues 83 to 87 and 138 to 141; these read DCPGH and NKAD. The G4 stretch occupies residues 138–141; it reads NKAD. Residues 179 to 181 form a G5 region; that stretch reads SAL.

The protein belongs to the TRAFAC class translation factor GTPase superfamily. Classic translation factor GTPase family. EF-Tu/EF-1A subfamily. Monomer.

Its subcellular location is the cytoplasm. It carries out the reaction GTP + H2O = GDP + phosphate + H(+). GTP hydrolase that promotes the GTP-dependent binding of aminoacyl-tRNA to the A-site of ribosomes during protein biosynthesis. In Leptospira biflexa serovar Patoc (strain Patoc 1 / Ames), this protein is Elongation factor Tu.